The primary structure comprises 170 residues: Adenine phosphoribosyltransferase (170 aa).

It belongs to the purine/pyrimidine phosphoribosyltransferase family. In terms of assembly, homodimer.

The protein resides in the cytoplasm. The catalysed reaction is AMP + diphosphate = 5-phospho-alpha-D-ribose 1-diphosphate + adenine. It functions in the pathway purine metabolism; AMP biosynthesis via salvage pathway; AMP from adenine: step 1/1. Catalyzes a salvage reaction resulting in the formation of AMP, that is energically less costly than de novo synthesis. In Enterococcus faecalis (strain ATCC 700802 / V583), this protein is Adenine phosphoribosyltransferase.